We begin with the raw amino-acid sequence, 212 residues long: Ribonuclease HII (212 aa).

Positions 22–212 (ILIAGLDEAG…APLKGMIDGL (191 aa)) constitute an RNase H type-2 domain. A divalent metal cation contacts are provided by aspartate 28, glutamate 29, and aspartate 123.

This sequence belongs to the RNase HII family. Requires Mn(2+) as cofactor. Mg(2+) serves as cofactor.

Its subcellular location is the cytoplasm. It carries out the reaction Endonucleolytic cleavage to 5'-phosphomonoester.. Endonuclease that specifically degrades the RNA of RNA-DNA hybrids. The polypeptide is Ribonuclease HII (Dehalococcoides mccartyi (strain ATCC BAA-2100 / JCM 16839 / KCTC 5957 / BAV1)).